The primary structure comprises 282 residues: 4-diphosphocytidyl-2-C-methyl-D-erythritol kinase (282 aa).

Residue Lys-12 is part of the active site. 95 to 105 is a binding site for ATP; that stretch reads PMGGGIGGGSS. Asp-137 is a catalytic residue.

Belongs to the GHMP kinase family. IspE subfamily.

It carries out the reaction 4-CDP-2-C-methyl-D-erythritol + ATP = 4-CDP-2-C-methyl-D-erythritol 2-phosphate + ADP + H(+). Its pathway is isoprenoid biosynthesis; isopentenyl diphosphate biosynthesis via DXP pathway; isopentenyl diphosphate from 1-deoxy-D-xylulose 5-phosphate: step 3/6. Functionally, catalyzes the phosphorylation of the position 2 hydroxy group of 4-diphosphocytidyl-2C-methyl-D-erythritol. The polypeptide is 4-diphosphocytidyl-2-C-methyl-D-erythritol kinase (Pseudomonas aeruginosa (strain UCBPP-PA14)).